The primary structure comprises 1940 residues: Protein ORF1940 (1940 aa).

TPR repeat units follow at residues 119 to 153 (IKAC…ALQY), 155 to 186 (FQSL…LQQI), 480 to 513 (RLPD…GLHG), and 617 to 652 (GKSM…SPTS). Disordered stretches follow at residues 1160-1239 (PSKV…PGAV) and 1519-1571 (KGPS…TVTS). Over residues 1164 to 1185 (QNTTQPSATQNTTTQPTAQNTS) the composition is skewed to low complexity. Polar residues predominate over residues 1186-1200 (LPGATQNTTLPTPSK). 3 stretches are compositionally biased toward low complexity: residues 1201-1235 (VQNT…NTSL), 1521-1539 (PSTT…MTPP), and 1561-1571 (TPGSGSQTVTS). One copy of the TPR 5 repeat lies at 1691-1724 (KDLNKSVGTSVVEEAKYNSTLQTYLAGLGIKDLN). Residues 1862–1940 (TTTHHITPPP…AEQAEQVLLI (79 aa)) are disordered. Residues 1868–1883 (TPPPPPPPPPPPPPPK) are compositionally biased toward pro residues. Over residues 1884-1894 (TQTITTTTQIT) the composition is skewed to low complexity. Over residues 1895–1912 (PPSPPPTPPPPPPPPKSP) the composition is skewed to pro residues.

The chain is Protein ORF1940 from Acidianus convivator (ATV).